The chain runs to 651 residues: Acetyl-coenzyme A synthetase (651 aa).

CoA-binding positions include 190–193 and Thr311; that span reads RRGK. ATP is bound by residues 387-389, 411-416, Asp508, and Arg523; these read GEP and DTWWQT. Ser531 is a CoA binding site. Position 534 (Arg534) interacts with ATP. Mg(2+)-binding residues include Val545, His547, and Val550. At Lys617 the chain carries N6-acetyllysine.

Belongs to the ATP-dependent AMP-binding enzyme family. Mg(2+) serves as cofactor. Acetylated. Deacetylation by the SIR2-homolog deacetylase activates the enzyme.

The enzyme catalyses acetate + ATP + CoA = acetyl-CoA + AMP + diphosphate. Its function is as follows. Catalyzes the conversion of acetate into acetyl-CoA (AcCoA), an essential intermediate at the junction of anabolic and catabolic pathways. AcsA undergoes a two-step reaction. In the first half reaction, AcsA combines acetate with ATP to form acetyl-adenylate (AcAMP) intermediate. In the second half reaction, it can then transfer the acetyl group from AcAMP to the sulfhydryl group of CoA, forming the product AcCoA. M.tuberculosis may use AcsA for both acetate and propionate assimilation. In Mycobacterium tuberculosis (strain CDC 1551 / Oshkosh), this protein is Acetyl-coenzyme A synthetase.